We begin with the raw amino-acid sequence, 142 residues long: Large ribosomal subunit protein uL13 (142 aa).

This sequence belongs to the universal ribosomal protein uL13 family. Part of the 50S ribosomal subunit.

In terms of biological role, this protein is one of the early assembly proteins of the 50S ribosomal subunit, although it is not seen to bind rRNA by itself. It is important during the early stages of 50S assembly. The sequence is that of Large ribosomal subunit protein uL13 from Shigella sonnei (strain Ss046).